We begin with the raw amino-acid sequence, 502 residues long: Glutamate--tRNA ligase (502 aa).

Residues 9-19 (PSPTGFPHVGT) carry the 'HIGH' region motif. The 'KMSKS' region signature appears at 250–254 (KLSKR). Position 253 (K253) interacts with ATP.

The protein belongs to the class-I aminoacyl-tRNA synthetase family. Glutamate--tRNA ligase type 1 subfamily. Monomer.

The protein localises to the cytoplasm. The catalysed reaction is tRNA(Glu) + L-glutamate + ATP = L-glutamyl-tRNA(Glu) + AMP + diphosphate. Catalyzes the attachment of glutamate to tRNA(Glu) in a two-step reaction: glutamate is first activated by ATP to form Glu-AMP and then transferred to the acceptor end of tRNA(Glu). The sequence is that of Glutamate--tRNA ligase from Acinetobacter baumannii (strain AYE).